A 233-amino-acid chain; its full sequence is 6-carboxyhexanoate--CoA ligase (233 aa).

This sequence belongs to the BioW family. Homodimer. Mg(2+) serves as cofactor.

It catalyses the reaction heptanedioate + ATP + CoA = 6-carboxyhexanoyl-CoA + AMP + diphosphate. It participates in metabolic intermediate metabolism; pimeloyl-CoA biosynthesis; pimeloyl-CoA from pimelate: step 1/1. Functionally, catalyzes the transformation of pimelate into pimeloyl-CoA with concomitant hydrolysis of ATP to AMP. In Methanocaldococcus sp. (strain FS406-22), this protein is 6-carboxyhexanoate--CoA ligase.